The chain runs to 244 residues: Ribosome maturation factor RimM (244 aa).

The segment at Met1–Met58 is disordered. Residues Lys13–Lys22 are compositionally biased toward low complexity. Positions Lys35 to Ala44 are enriched in basic and acidic residues. A compositionally biased stretch (low complexity) spans Lys45–Glu57. The region spanning Ala163 to Tyr244 is the PRC barrel domain.

The protein belongs to the RimM family. In terms of assembly, binds ribosomal protein uS19.

It is found in the cytoplasm. In terms of biological role, an accessory protein needed during the final step in the assembly of 30S ribosomal subunit, possibly for assembly of the head region. Essential for efficient processing of 16S rRNA. May be needed both before and after RbfA during the maturation of 16S rRNA. It has affinity for free ribosomal 30S subunits but not for 70S ribosomes. This chain is Ribosome maturation factor RimM, found in Paraburkholderia xenovorans (strain LB400).